A 185-amino-acid polypeptide reads, in one-letter code: MATTTTPRLKTKYREEIAGKLQEEFSYENVMQTPGLVKIVVNMGVGDAARDSKLIDGAIRDLTTITGQKPAVTKARKSIAQFKLREGQPIGAHVTLRGDRMWEFLDRTLSLALPRIRDFRGLSPKQFDGRGNYTFGLTEQVMFHEIDQDKIDRVRGMDITVVTTATNDAEGRALLRHLGFPFKEA.

Belongs to the universal ribosomal protein uL5 family. Part of the 50S ribosomal subunit; part of the 5S rRNA/L5/L18/L25 subcomplex. Contacts the 5S rRNA and the P site tRNA. Forms a bridge to the 30S subunit in the 70S ribosome.

In terms of biological role, this is one of the proteins that bind and probably mediate the attachment of the 5S RNA into the large ribosomal subunit, where it forms part of the central protuberance. In the 70S ribosome it contacts protein S13 of the 30S subunit (bridge B1b), connecting the 2 subunits; this bridge is implicated in subunit movement. Contacts the P site tRNA; the 5S rRNA and some of its associated proteins might help stabilize positioning of ribosome-bound tRNAs. This Streptomyces avermitilis (strain ATCC 31267 / DSM 46492 / JCM 5070 / NBRC 14893 / NCIMB 12804 / NRRL 8165 / MA-4680) protein is Large ribosomal subunit protein uL5.